The sequence spans 84 residues: Magnetosome protein MamG (84 aa).

Over 1–3 the chain is Cytoplasmic; that stretch reads MIK. Residues 4-24 form a helical membrane-spanning segment; the sequence is GIAGVGGTALGVGGGVAAPPV. At 25 to 40 the chain is on the lumenal side; the sequence is SAAAVGSTLLAGKGVC. Residues 41 to 48 are LG repeat; it reads LGLGLGLG. A helical transmembrane segment spans residues 41 to 61; it reads LGLGLGLGAWGPVLLGVAGLA. Over 62-84 the chain is Cytoplasmic; it reads CAASLCDYLKNRKAQAEASAEPA.

The protein belongs to the magnetosome MamG (TC 9.B.95) protein family.

The protein resides in the magnetosome membrane. Its function is as follows. Plays a role in regulating magnetite crystal size. In Magnetospirillum gryphiswaldense (strain DSM 6361 / JCM 21280 / NBRC 15271 / MSR-1), this protein is Magnetosome protein MamG.